Here is a 265-residue protein sequence, read N- to C-terminus: Neuronal membrane glycoprotein M6-b (265 aa).

The helical transmembrane segment at 31–51 threads the bilayer; it reads GGVPYASLVATILCFSGVALF. A glycan (N-linked (GlcNAc...) asparagine) is linked at Asn73. Transmembrane regions (helical) follow at residues 90 to 110 and 136 to 156; these read VIYGIASFFFLYVIILLAEGF and FVFLTYVLGVAWLGVFGFSAV. N-linked (GlcNAc...) asparagine glycosylation is present at Asn177. A helical transmembrane segment spans residues 224–244; sequence LFIVACAGAGATVIALLIYMM. Ser257 bears the Phosphoserine mark.

Belongs to the myelin proteolipid protein family. Interacts with SERT.

The protein resides in the membrane. It localises to the cell membrane. Its function is as follows. May be involved in neural development. Involved in regulation of osteoblast function and bone formation. Involved in matrix vesicle release by osteoblasts; this function seems to involve maintenance of the actin cytoskeleton. May be involved in cellular trafficking of SERT and thereby in regulation of serotonin uptake. This is Neuronal membrane glycoprotein M6-b (GPM6B) from Pongo abelii (Sumatran orangutan).